The following is a 339-amino-acid chain: AB hydrolase superfamily protein B1A11.02 (339 aa).

Belongs to the AB hydrolase superfamily.

In Schizosaccharomyces pombe (strain 972 / ATCC 24843) (Fission yeast), this protein is AB hydrolase superfamily protein B1A11.02.